A 213-amino-acid chain; its full sequence is Ribonuclease HII (213 aa).

The RNase H type-2 domain maps to 2 to 213 (GRVAGIDEAG…KEWATWKRLR (212 aa)). The a divalent metal cation site is built by Asp8, Glu9, and Asp113.

Belongs to the RNase HII family. Mn(2+) serves as cofactor. It depends on Mg(2+) as a cofactor.

It localises to the cytoplasm. The catalysed reaction is Endonucleolytic cleavage to 5'-phosphomonoester.. Endonuclease that specifically degrades the RNA of RNA-DNA hybrids. The sequence is that of Ribonuclease HII from Thermofilum pendens (strain DSM 2475 / Hrk 5).